The chain runs to 290 residues: tRNA-cytidine(32) 2-sulfurtransferase (290 aa).

The PP-loop motif signature appears at Ser66–Ser71. Cys141, Cys144, and Cys232 together coordinate [4Fe-4S] cluster.

It belongs to the TtcA family. In terms of assembly, homodimer. Mg(2+) is required as a cofactor. The cofactor is [4Fe-4S] cluster.

It is found in the cytoplasm. The enzyme catalyses cytidine(32) in tRNA + S-sulfanyl-L-cysteinyl-[cysteine desulfurase] + AH2 + ATP = 2-thiocytidine(32) in tRNA + L-cysteinyl-[cysteine desulfurase] + A + AMP + diphosphate + H(+). Its pathway is tRNA modification. Its function is as follows. Catalyzes the ATP-dependent 2-thiolation of cytidine in position 32 of tRNA, to form 2-thiocytidine (s(2)C32). The sulfur atoms are provided by the cysteine/cysteine desulfurase (IscS) system. This is tRNA-cytidine(32) 2-sulfurtransferase from Rhizobium etli (strain ATCC 51251 / DSM 11541 / JCM 21823 / NBRC 15573 / CFN 42).